Here is a 5596-residue protein sequence, read N- to C-terminus: MEHFLLEVAAAPLRLIAAKNEKSRSELGRFLAKQVWTPQDRQCVLSTLAQLLLDKDCTVLVGRQLRPLLLDLLERNAEAIKAGGQINHDLHERLCVSMSKLIGNHPDVLPFALRYFKDTSPVFQRLFLESSDANPVRYGRRRMKLRDLMEAAFKFLQQEQSVFRELWDWSVCVPLLRSHDTLVRWYTANCLALVTCMNEEHKLSFLKKIFNSDELIHFRLRLLEEAQLQDLEKALVLANPEVSLWRKQKELQYLQGHLVSSDLSPRVTAVCGVVLPGQLPAPGELGGNRSSSREQELALRSYVLVESVCKSLQTLAMAVASQNAVLLEGPIGCGKTSLVEYLAAVTGRTKPPQLLKVQLGDQTDSKMLLGMYRCTDVPGEFVWQPGTLTQAATMGHWILLEDIDYAPLDVVSVLIPLLENGELLIPGRGDCLKVAPGFQFFATRRLLSCGGNWYRPLNSHATLLDKYWTKIHLDNLDKRELNEVLQSRYPSLLAVVDHLLDIYIQLTGEKHHSWSDSSVGCEQAPEEVSEARRENKRPTLEGRELSLRDLLNWCNRIAHSFDSSSLSASLNIFQEALDCFTAMLSEHTSKLKMAEVIGSKLNISRKKAEFFCQLYKPEIVINELDLQVGRVRLLRKQSEAVHLQREKFTFAATRPSSVLIEQLAVCVSKGEPVLLVGETGTGKTSTIQYLAHITGHRLRVVNMNQQSDTADLLGGYKPVDHKLIWLPLREAFEELFAQTFSKKQNFTFLGHIQTCYRQKRWHDLLRLMQHVHKSAVNKDGKDSETGLLIKEKWEAFGLRLNHAQQQMKMTENTLLFAFVEGTLAQAVKKGEWILLDEINLAAPEILECLSGLLEGSSGSLVLLDRGDTEPLVRHPDFRLFACMNPATDVGKRNLPPGIRNRFTELYVEELESKEDLQVLIVDYLKGLSVNKNTVQGIINFYTALRKESGTKLVDGTGHRPHYSLRTLCRALRFAASNPCGNIQRSLYEGFCLGFLTQLDRASHPIVQKLICQHIVPGNVKSLLKQPIPEPKGGRLIQVEGYWIAVGDKEPTIDETYILTSSVKLNLRDIVRVVSAGTYPVLIQGETSVGKTSLIQWLAAATGNHCVRINNHEHTDIQEYIGCYTSDSSGKLVFKEGVLIDAMRKGYWIILDELNLAPTDVLEALNRLLDDNRELLVTETQEVVKAHPRFMLFATQNPPGLYGGRKVLSRAFRNRFVELHFDELPSSELETILHKRCSLPPSYCSKLVKVMLDLQSYRRSSSVFAGKQGFITLRDLFRWAERYRLAEPTEKEYDWLQHLANDGYMLLAGRVRKQEEIDVIQEVLEKHFKKKLCPQSLFSKENVLKLLGKLSTQISTLECNFGHIVWTEGMRRLAMLVGRALEFGEPVLLVGDTGCGKTTICQVFAALANQKLYSVSCHLHMETSDFLGGLRPVRQKPNDKEEIDTSRLFEWHDGPLVQAMKEDGFFLLDEISLADDSVLERLNSVLEVEKSLVLAEKGSPEDKDSEIELLTAGKKFRILATMNPGGDFGKKELSPALRNRFTEIWCPQSTSREDLIQIISHNLRPGLCLGRIDPKGSDIPEVMLDFIDWLTHQEFGRKCVVSIRDILSWVNFMNKMGEEAALKRPEIISTVTSFVHAACLVYIDGIGSGVTSSGFGTALLARKECLKFLIKRLAKIVRLTEYQKNELKIYDRMKAKEFTGIDNLWGIHPFFIPRGPVLHRNNIADYALSAGTTAMNAQRLLRATKLKKPILLEGSPGVGKTSLVGALAKASGNTLVRINLSEQTDITDLFGADLPVEGGKGGEFAWRDGPLLAALKAGHWVVLDELNLASQSVLEGLNACFDHRGEIYVPELGMSFQVQHEKTKIFGCQNPFRQGGGRKGLPRSFLNRFTQVFVDPLTVIDMEFIASTLFPAIEKNIVKKMVAFNNQIDHEVTVEKKWGQKGGPWEFNLRDLFRWCQLMLVDQSPGCYDPGQHVFLVYGERMRTEEDKKKVIAVFKDVFGSNSNPYMGTRLFRITPYDVQLGYSVLSRGSCVPHPSRHPLLLLHQSFQPLESIMKCVQMSWMVILVGPASVGKTSLVQLLAHLTGHTLKIMAMNSAMDTTELLGGFEQVDLIRPWRRLLEKVEGTVRALLRDSLLISADDAEVVLRAWSHFLLTYKPKCLGEGGKAITMEIVNKLEAVLLLMQRLNNKINSYCKAEFAKLVEEFRSFGVKLTQLASGHSHGTFEWVDSMLVQALKSGDWLLMDNVNFCNPSVLDRLNALLEPGGVLTISERGMIDGSTPTITPNPNFRLFLSMDPVHGDISRAMRNRGLEIYISGEGDASTPDNLDLKVLLHSLGLVGNSVCDILLALHTETRSTVVGSPTSSVSTLIQTAILIVQYLQRGLSLDRAFSEACWEVYVCSQHSPANRKLVQALLEKHVSSLRAHETWGDSILGMGLWPDSVPSALFATEDSHLSTVRRDGQILVYCLNRMSMKTSSWTRSQPFTLQDLEKIMQSPSPENLKFNAVEVNTYWIDEPDVLVMAVKLLIERATNQDWMLRVKWLYHLAKNIPQGLESIQIHLEASAASLRNFYSHSLSGAVSNVFKILQPNTTDEFVIPLDPRWNMQALDMIRNLMDFDPQTDQPDQLFALLESAANKTIIYLDREKRVFTEANLVSVGSKKLRESVLRMSFEFHQDPESYHTLPHEIVVNLAAFFELCDALVLLWVQSSQGMVSDASANEILGSLRWRDRFWTVADTVKVDAPGLALLALHWHWVLKHLVHQIPRLLMNYEDKYYKEVQTVSEHIQNCLGSQTGGFAGIKKLQKFLGRPFPFKDKLVVECFSQLKVLNKVLAIREQMSALGESGWQEDINRLQVVASQWTLKKSLLQAWGLILRANILEDVSLDELKNFVHAQCLELKAKGLSLGFLEKKHDEASSLSHPDLTSVIHLTRSVQLWPAMEYLAMLWRYKVTADFMAQACLRRCSKNQQPQINEEISHLISFCLYHTPVTPQELRDLWSLLHHQKVSPEEITSLWSELFNSMFMSFWSSTVTTNPEYWLMWNPLPGMQQREAPKSVLDSTLKGPGNLNRPIFSKCCFEVLTSSWRASPWDVSGLPILSSSHVTLGEWVERTQQLQDISSMLWTNMAISSVAEFRRTDSQLQGQVLFRHLAGLAELLPESRRQEYMQNCEQLLLGSSQAFQHVGQTLGDMAGQEVLPKELLCQLLTSLHHFVGEGESKRSLPEPAQRGSLWVSLGLLQIQTWLPQARFDPAVKREYKLNYVKEELHQLQCEWKTRNLSSQLQTGRDLEDEVVVSYSHPHVRLLRQRMDRLDNLTCHLLKKQAFRPQLPAYESLVQEIHHYVTSIAKAPAVQDLLTRLLQALHIDGPRSAQVAQSLLKEEASWQQSHHQFRKRLSEEYTFYPDAVSPLQASILQLQHGMRLVASELHTSLHSSMVGADRLGTLATALLAFPSVGPTFPTYYAHADTLCSVKSEEVLRGLGKLILKRSGGKELEGKGQKACPTREQLLMNALLYLRSHVLCKGELDQRALQLFRHVCQEIISEWDEQERIAQEKAEQESGLYRYRSRNSRTALSEEEEEEREFRKQFPLHEKDFADILVQPTLEENKGTSDGQEEEAGTNPALLSQNSMQAVMLIHQQLCLNFARSLWYQQTLPPHEAKHYLSLFLSCYQTGASLVTHFYPLMGVELNDRLLGSQLLACTLSHNTLFGEAPSDLMVKPDGPYDFYQHPNVPEARQCQPVLQGFSEAVSHLLQDWPEHPALEQLLVVMDRIRSFPLSSPISKFLNGLEILLAKAQDWEENASRALSLRKHLDLISQMIIRWRKLELNCWSMSLDNTMKRHTEKSTKHWFSIYQMLEKHMQEQTEEQEDDKQMTLMLLVSTLQAFIEGSSLGEFHVRLQMLLVFHCHVLLMPQVEGKDSLCSVLWNLYHYYKQFFDRVQAKIVELRSPLEKELKEFVKISKWNDVSFWSIKQSVEKTHRTLFKFMKKFEAVLSEPCRSSLVESDKEEQPDFLPRPTDGAASELSSIQNLNRALRETLLAQPAAGQATIPEWCQGAAPSGLEGELLRRLPKLRKRMRKMCLTFMKESPLPRLVEGLDQFTGEVISSVSELQSLKVEPSAEKEKQRSEAKHILMQKQRALSDLFKHLAKIGLSYRKGLAWARSKNPQEMLHLHPLDLQSALSIVSSTQEADSRLLTEISSSWDGCQKYFYRSLARHARLNAALATPAKEMGMGNVERCRGFSAHLMKMLVRQRRSLTTLSEQWIILRNLLSCVQEIHSRLMGPQAYPVAFPPQDGVQQWTERLQHLAMQCQILLEQLSWLLQCCPSVGPAPGHGNVQVLGQPPGPCLEGPELSKGQLCGVVLDLIPSNLSYPSPIPGSQLPSGCRMRKQDHLWQQSTTRLTEMLKTIKTVKADVDKIRQQSCETLFHSWKDFEVCSSALSCLSQVSVHLQGLESLFILPGMEVEQRDSQMALVESLEYVRGEISKAMADFTTWKTHLLTSDSQGGNQMLDEGFVEDFSEQMEIAIRAILCAIQNLEERKNEKAEENTDQASPQEDYAGFERLQSGHLTKLLEDDFWADVSTLHVQKIISAISELLERLKSYGEDGTAAKHLFFSQSCSLLVRLVPVLSSYSDLVLFFLTMSLATHRSTAKLLSVLAQVFTELAQKGFCLPKEFMEDSAGEGATEFHDYEGGGIGEGEGMKDVSDQIGNEEQVEDTFQKGQEKDKEDPDSKSDIKGEDNAIEMSEDFDGKMHDGELEEQEEDDEKSDSEGGDLDKHMGDLNGEEADKLDERLWGDDDEEEDEEEEDNKTEETGPGMDEEDSELVAKDDNLDSGNSNKDKSQQDKKEEKEEAEADDGGQGEDKINEQIDERDYDENEVDPYHGNQEKVPEPEALDLPDDLNLDSEDKNGGEDTDNEEGEEENPLEIKEKPEEAGHEAEERGETETDQNESQSPQEPEEGPSEDDKAEGEEEMDTGADDQDGDAAQHPEEHSEEQQQSVEEKDKEADEEGGENGPADQGFQPQEEEEREDSDTEEQVPEALERKEHASCGQTGVENMQNTQAMELAGAAPEKEQGKEEHGSGAADANQAEGHESNFIAQLASQKHTRKNTQSFKRKPGQADNERSMGDHNERVHKRLRTVDTDSHAEQGPAQQPQAQVEDADAFEHIKQGSDAYDAQTYDVASKEQQQSAKDSGKDQEEEEIEDTLMDTEEQEEFKAADVEQLKPEEIKSGTTAPLGFDEMEVEIQTVKTEEDQDPRTDKAHKETENEKPERSRESTIHTAHQFLMDTIFQPFLKDVNELRQELERQLEMWQPRESGNPEEEKVAAEMWQSYLILTAPLSQRLCEELRLILEPTQAAKLKGDYRTGKRLNIRKVIPYIASQFRKDKIWLRRTKPSKRQYQICLAIDDSSSMVDNHTKQLAFESLAVIGNALTLLEVGQIAVCSFGESVKLLHPFHEQFSDYSGSQILRLCKFQQKKTKIAQFLESVANMFAAAQQLSQNISSETAQLLLVVSDGRGLFLEGKERVLAAVQAARNANIFVIFVVLDNPSSRDSILDIKVPIFKGPGEMPEIRSYMEEFPFPYYIILRDVNALPETLSDALRQWFELVTASDHP.

Met1 bears the N-acetylmethionine mark. AAA-ATPase protomer regions lie at residues 307–591 (SVCK…TSKL), 659–978 (LIEQ…ASNP), 1048–1316 (KEPT…QEEI), and 1362–1616 (HIVW…NKMG). 329–336 (GPIGCGKT) contacts ATP. The disordered stretch occupies residues 517 to 537 (SSVGCEQAPEEVSEARRENKR). ATP-binding positions include 677-684 (GETGTGKT) and 1084-1091 (GETSVGKT). Thr1177 bears the Phosphothreonine mark. 1390–1397 (GDTGCGKT) is an ATP binding site. N6-acetyllysine is present on Lys1683. AAA-ATPase protomer stretches follow at residues 1738–1995 (RLLR…AVFK) and 2053–2313 (MKCV…IYIS). ATP contacts are provided by residues 1753 to 1760 (GSPGVGKT) and 2066 to 2073 (GPASVGKT). A Phosphoserine modification is found at Ser1754. The interval 2418–4691 (SLRAHETWGD…EGEGMKDVSD (2274 aa)) is linker. A disordered region spans residues 3989 to 4008 (LVESDKEEQPDFLPRPTDGA). Thr4212 is modified (phosphothreonine). Residue Ser4538 is modified to Phosphoserine. Disordered stretches follow at residues 4669 to 4688 (ATEF…GMKD) and 4700 to 5260 (EDTF…SRES). Over residues 4702–4724 (TFQKGQEKDKEDPDSKSDIKGED) the composition is skewed to basic and acidic residues. Residues 4741–4757 (ELEEQEEDDEKSDSEGG) show a composition bias toward acidic residues. Ser4752 and Ser4754 each carry phosphoserine. Basic and acidic residues predominate over residues 4758-4780 (DLDKHMGDLNGEEADKLDERLWG). A compositionally biased stretch (acidic residues) spans 4781–4794 (DDDEEEDEEEEDNK). Basic and acidic residues predominate over residues 4822–4834 (NKDKSQQDKKEEK). The span at 4835–4844 (EEAEADDGGQ) shows a compositional bias: acidic residues. A compositionally biased stretch (basic and acidic residues) spans 4845 to 4855 (GEDKINEQIDE). Residues 4877 to 4888 (EALDLPDDLNLD) are compositionally biased toward acidic residues. Position 4889 is a phosphoserine (Ser4889). Residues 4896 to 4908 (EDTDNEEGEEENP) are compositionally biased toward acidic residues. Residue Thr4898 is modified to Phosphothreonine. Basic and acidic residues predominate over residues 4909-4928 (LEIKEKPEEAGHEAEERGET). Phosphoserine is present on residues Ser4937 and Ser4946. Positions 4940–4966 (EPEEGPSEDDKAEGEEEMDTGADDQDG) are enriched in acidic residues. Residues 4968–4989 (AAQHPEEHSEEQQQSVEEKDKE) show a composition bias toward basic and acidic residues. Positions 5007–5021 (QEEEEREDSDTEEQV) are enriched in acidic residues. Phosphoserine is present on Ser5015. The segment covering 5033–5046 (CGQTGVENMQNTQA) has biased composition (polar residues). A compositionally biased stretch (basic and acidic residues) spans 5054-5064 (PEKEQGKEEHG). Basic residues predominate over residues 5088-5101 (KHTRKNTQSFKRKP). Basic and acidic residues predominate over residues 5105–5115 (DNERSMGDHNE). Residues 5132 to 5141 (QGPAQQPQAQ) show a composition bias toward low complexity. A compositionally biased stretch (acidic residues) spans 5181–5197 (QEEEEIEDTLMDTEEQE). Composition is skewed to basic and acidic residues over residues 5198–5213 (EFKA…EEIK) and 5233–5260 (KTEE…SRES). Positions 5384 to 5583 (QICLAIDDSS…ALPETLSDAL (200 aa)) constitute a VWFA domain.

This sequence belongs to the midasin family. In terms of assembly, associates with pre-60S ribosomes in the nucleoplasm. Interacts (via its hexameric AAA ATPase ring) with the PELP1 complex (via PELP1); the interaction is regulated by SUMO conjugation of PELP1 and is crucial for recruitment of MDN1 to the pre-ribosomal particle. Interacts (via VWFA/MIDAS domain) with WDR12 (via UBL domain). Interacts (via VWFA/MIDAS domain) with NLE1 (via UBL domain).

Its subcellular location is the nucleus. It is found in the nucleolus. The protein localises to the nucleoplasm. It localises to the cytoplasm. Functionally, nuclear chaperone required for maturation and nuclear export of pre-60S ribosome subunits. Functions at successive maturation steps to remove ribosomal factors at critical transition points, first driving the exit of early pre-60S particles from the nucleolus and then driving late pre-60S particles from the nucleus. At an early stage in 60S maturation, mediates the dissociation of the PeBoW complex (PES1-BOP1-WDR12) from early pre-60S particles, rendering them competent for export from the nucleolus to the nucleoplasm. Subsequently recruited to the nucleoplasmic particles through interaction with SUMO-conjugated PELP1 complex. This binding is only possible if the 5S RNP at the central protuberance has undergone the rotation to complete its maturation. The polypeptide is Midasin (MDN1) (Homo sapiens (Human)).